The chain runs to 194 residues: Outer-membrane lipoprotein LolB (194 aa).

The first 18 residues, 1–18 (MTLLLRLFTLGCLLLLAG), serve as a signal peptide directing secretion. Cys-19 carries the N-palmitoyl cysteine lipid modification. Cys-19 carries the S-diacylglycerol cysteine lipid modification.

Belongs to the LolB family. In terms of assembly, monomer.

The protein localises to the cell outer membrane. In terms of biological role, plays a critical role in the incorporation of lipoproteins in the outer membrane after they are released by the LolA protein. The protein is Outer-membrane lipoprotein LolB of Aeromonas hydrophila subsp. hydrophila (strain ATCC 7966 / DSM 30187 / BCRC 13018 / CCUG 14551 / JCM 1027 / KCTC 2358 / NCIMB 9240 / NCTC 8049).